A 139-amino-acid polypeptide reads, in one-letter code: General odorant-binding protein 56a (139 aa).

The N-terminal stretch at 1–19 (MNSYFVIALSALFVTLAVG) is a signal peptide. An N-linked (GlcNAc...) asparagine glycan is attached at N23. 3 disulfide bridges follow: C39-C71, C67-C118, and C109-C127.

Belongs to the PBP/GOBP family. Expressed in ventral pits of larvae. In adults, it is not specifically expressed in chemosensory organs. Also expressed in stalk cells at the proximal tip of the wing disk.

Its subcellular location is the secreted. Functionally, present in the aqueous fluid surrounding olfactory sensory dendrites and are thought to aid in the capture and transport of hydrophobic odorants into and through this fluid. This chain is General odorant-binding protein 56a (Obp56a), found in Drosophila melanogaster (Fruit fly).